An 883-amino-acid polypeptide reads, in one-letter code: MAPAPCGRSSQRVFHFGKGKSEGNKNMKELLGGKGANLAEMASIGLSVPPGFTVSTEACQQYQEAGRALPPGLWAEVLDGLRWVEEYMGAALGDPRRPLLLSVRSGAAVSMPGMMDTVLNLGLNDQVAAGLAAKSGDRFAYDSFRRFLDMFGNVVMDIPHALFEEKLEAMKKAKGLKNDTDLTATDLKELVSQYKNVYVEAKGEPFPSDPKRQLELAVLAVFDSWESPRAKKYRSINQITGLRGTAVNVQCMVFGNMGNTSGTGVLFTRNPNTGEKKLYGEFLVNAQGEDVVAGIRTPEDLDAMKDVMPQAYKELVENCRILESHYKEMQDIEFTVQESRLWMLQCRTGKRTGKSAVKIAVDMVNEGLVERRAAIKMVEPGHLDQLLHPQFENPSAYKDQVIATGLPASPGAAVGQVVFTAEDAETWHSQGKSVILVRAETSPEDVGGMHAAAGILTERGGMTSHAAVVARGWGKCCVSGCSGIRVNDAEKVVKIGGNVLREGEWLSLNGSTGEVILGKQPLSPPALSGDLGTFMSWVDDVRKLKVLANADTPEDALAARNNGAEGIGLCRTEHMFFASDERIKAVRQMIMAPTVELRQQALDRLLPYQRSDFEGIFRAMDGLSVTIRLLDPPLHEFLPEGNVEEIVRELCSETGANQEDALARIEKLSEVNPMLGFRGCRLGISYPELTEMQARAIFEAAIAMTNQGVQVFPEIMVPLVGTPQELGHQVALIRQVANKVFTSMGKTIGYKIGTMIEIPRAALVADEIAEQAEFFSFGTNDLTQMTFGYSRDDVGKFIPIYLAQGILQHDPFEVLDQRGVGELVKLATERGRKARPNLKVGICGEHGGEPSSVAFFAKTGLDYVSCSPFRVPIARLAAAQVLV.

The tract at residues 1 to 21 is disordered; that stretch reads MAPAPCGRSSQRVFHFGKGKS. His-465 functions as the Tele-phosphohistidine intermediate in the catalytic mechanism. Substrate is bound by residues Arg-571, Arg-628, Glu-757, Gly-778, Thr-779, Asn-780, and Asp-781. Glu-757 provides a ligand contact to Mg(2+). Position 781 (Asp-781) interacts with Mg(2+). The active-site Proton donor is Cys-843.

The protein belongs to the PEP-utilizing enzyme family. Mg(2+) serves as cofactor. In terms of tissue distribution, expressed in leaves, roots and stems.

It is found in the cytoplasm. It carries out the reaction pyruvate + phosphate + ATP = phosphoenolpyruvate + AMP + diphosphate + H(+). Formation of phosphoenolpyruvate, which is the primary acceptor of CO(2) in C4 and some Crassulacean acid metabolism plants. This Zea mays (Maize) protein is Pyruvate, phosphate dikinase 2.